The chain runs to 427 residues: Ribose-phosphate pyrophosphokinase 1 (427 aa).

Asp128, His130, and Asp143 together coordinate Mg(2+). Residues Ser199, Ser218, Ser271, and Ser295 each carry the phosphoserine modification.

This sequence belongs to the ribose-phosphate pyrophosphokinase family.

The protein resides in the cytoplasm. It carries out the reaction D-ribose 5-phosphate + ATP = 5-phospho-alpha-D-ribose 1-diphosphate + AMP + H(+). The protein operates within metabolic intermediate biosynthesis; 5-phospho-alpha-D-ribose 1-diphosphate biosynthesis; 5-phospho-alpha-D-ribose 1-diphosphate from D-ribose 5-phosphate (route I): step 1/1. 5-phosphoribose 1-diphosphate synthase involved in nucleotide, histidine, and tryptophan biosynthesis. Active in heteromultimeric complexes with other 5-phosphoribose 1-diphosphate synthases (PRS2, PRS3, PRS4 and PRS5). The protein is Ribose-phosphate pyrophosphokinase 1 (PRS1) of Saccharomyces cerevisiae (strain ATCC 204508 / S288c) (Baker's yeast).